Reading from the N-terminus, the 352-residue chain is Pheromone-regulated membrane protein 6 (352 aa).

Over 1 to 36 (MESSLQKLKFQDIDINLIPTAKWTTKLQYILYTWCQ) the chain is Extracellular. A helical transmembrane segment spans residues 37–57 (SILHVAMFFSDIYTCIKLLAF). Topologically, residues 58–76 (NTWSNNIIQPFLEFRISKW) are cytoplasmic. Residues 77 to 97 (LFSGCILCSSLILIWELVIGL) form a helical membrane-spanning segment. At 98 to 227 (RVYRKKEITS…VILSFMLFSF (130 aa)) the chain is on the extracellular side. The chain crosses the membrane as a helical span at residues 228-248 (IIWVILISKLILSIIIFIIFI). Residues 249–352 (RPRFLSSKRK…FPQKYKHKYI (104 aa)) lie on the Cytoplasmic side of the membrane.

The protein belongs to the KCH1 low affinity K(+) transporter family.

The protein resides in the cell membrane. It is found in the bud tip. It localises to the vacuole lumen. The enzyme catalyses K(+)(in) = K(+)(out). Functionally, low affinity potassium transporter that, with KCH1, participates in high-affinity Ca(2+) influx system (HACS) activation during the response to mating pheromone. Directly promotes K(+) influx and HACS may electrochemically respond to this K(+) influx. KCH1 and PRM6/KCH2 act at the apex of the calcium signaling pathway that is used for survival during prolonged exposures to mating pheromones. This is Pheromone-regulated membrane protein 6 from Saccharomyces cerevisiae (strain ATCC 204508 / S288c) (Baker's yeast).